Consider the following 392-residue polypeptide: DNA replication and repair protein RecF (392 aa).

Residue 33–40 participates in ATP binding; that stretch reads GANGAGKT.

This sequence belongs to the RecF family.

The protein resides in the cytoplasm. The RecF protein is involved in DNA metabolism; it is required for DNA replication and normal SOS inducibility. RecF binds preferentially to single-stranded, linear DNA. It also seems to bind ATP. The polypeptide is DNA replication and repair protein RecF (Caulobacter sp. (strain K31)).